Reading from the N-terminus, the 677-residue chain is Beta-galactosidase (677 aa).

The N-terminal stretch at 1-23 (MPGFLVRILPLLLALLLLGPTRG) is a signal peptide. Positions 24–28 (LRNAT) are excised as a propeptide. Asparagine 26 carries N-linked (GlcNAc...) asparagine glycosylation. Substrate is bound by residues tyrosine 83, glutamate 129, and asparagine 187. The active-site Proton donor is glutamate 188. Residues cysteine 195 and cysteine 230 are joined by a disulfide bond. The N-linked (GlcNAc...) asparagine glycan is linked to asparagine 247. The active-site Nucleophile is glutamate 268. A substrate-binding site is contributed by tyrosine 333. N-linked (GlcNAc...) asparagine glycans are attached at residues asparagine 464, asparagine 498, asparagine 545, and asparagine 555. Cysteines 626 and 634 form a disulfide. The interval 654 to 677 (SKPVEKKLMPSPPQKNKDSWLDHV) is disordered. The segment covering 668-677 (KNKDSWLDHV) has biased composition (basic and acidic residues).

The protein belongs to the glycosyl hydrolase 35 family. Homodimer. May form higher multimers.

Its subcellular location is the lysosome. It catalyses the reaction Hydrolysis of terminal non-reducing beta-D-galactose residues in beta-D-galactosides.. Functionally, cleaves beta-linked terminal galactosyl residues from gangliosides, glycoproteins, and glycosaminoglycans. The protein is Beta-galactosidase (GLB1) of Pongo abelii (Sumatran orangutan).